The primary structure comprises 704 residues: MDSLKLPKANSATSSASGSNSNLSGSTSASASAATSPTSSGTAVGGILSGAPKSPPGLGSSTPISVRFNANEESLDDILQSFHHSKHSPSGGASGGGDASPTSNLLGMKNNGLGLVVGNCDSLSSSPSQPQMHAGSASLFGNDEVSLRNNFMQAGGFFNRKSCGGLPNLNLNKPPQLHQQQHQQQHQQHQQHQQQQQLHQHQQQLSPNLSALHHHHQQQQQLRESGGSHSPSSPGGGGGGSPYNGSQAGCSSGGISPIPPQMGVSPKYRRSISFPIKGNSPTAIYGNMHMDGMGSGHMNIPTLSIGNGGGGGSTGMVSAGATGGGDAPYLGNSYGNMMTSNGQMHHGGGLDNSLCDYMRNMSLGGNGGGDGSNSMSLMQDRMRVMGGPKHLSEADAMAIAASGNDPSVYLNALKMGSPSRLSPHSPHSPIQGGNGGNVGDGTARFSRKVFVGGLPPDIDEDEITTSFRRFGPLVVDWPHKAESKSYFPPKGYAFLLFQDESSVQQLIDSCITDEDKLYLCVSSPTIKDKAVQIRPWRLADADYVLDATMSLDPRKTVFVGGVPRPLKAFELAMIMDRLYGGVCYAGIDTDPELKYPKGAGRVAFSNQQSYIAAISARFVQLQHGDIDKRVEVKPYVLDDQMCDECEGQRCGGKFAPFFCANVTCLQYYCEHCWAVIHSRPGREYHKPLVKEGADRPRAVPFRWC.

The tract at residues 1–64 is disordered; the sequence is MDSLKLPKAN…PPGLGSSTPI (64 aa). Positions 1–87 are gln/His-rich; the sequence is MDSLKLPKAN…ILQSFHHSKH (87 aa). The span at 9-42 shows a compositional bias: low complexity; the sequence is ANSATSSASGSNSNLSGSTSASASAATSPTSSGT. 3 positions are modified to phosphoserine: S74, S88, and S100. Disordered regions lie at residues 82 to 106, 166 to 266, and 417 to 438; these read FHHSKHSPSGGASGGGDASPTSNLL, LPNL…GVSP, and SPSRLSPHSPHSPIQGGNGGNV. The tract at residues 163 to 240 is gln/His-rich; that stretch reads CGGLPNLNLN…PSSPGGGGGG (78 aa). 3 stretches are compositionally biased toward low complexity: residues 176-205, 218-233, and 417-429; these read QLHQQQHQQQHQQHQQHQQQQQLHQHQQQL, QQQQLRESGGSHSPSS, and SPSRLSPHSPHSP. S425 and S428 each carry phosphoserine. 2 RRM domains span residues 447 to 538 and 555 to 637; these read RKVF…PWRL and KTVF…PYVL.

Monomer. Upon neuronal stimulation, forms stable amyloid-like oligomers composed of isoform A and isoform B which are required for formation of persistent long-term memory. Isoform A is critical for oligomer formation. Phe-5 of isoform A is required for amyloid-like oligomerization. Rapidly forms amyloids and toxic intermediates are extremely transient. Unlike in the adult nervous system, remains monomeric in the early embryo. Interacts with the translational regulator bol. Interacts with Tob; the interaction is enhanced by neuronal stimulation, stabilizes isoform A and induces oligomerization. Post-translationally, phosphorylation regulates interaction with Tob and oligomerization. Protein phosphatase 2A keeps both Orb2 and Tob in an unphosphorylated form. Following synaptic activation, unphosphorylated Orb2 is bound and stabilized by unphosphorylated Tob. Tob recruits activated LimK which phosphorylates both Orb2 and Tob and enhances Orb2 oligomerization. Broadly expressed throughout the nervous system of embryo, larva and adult including the ventral nerve cord and brain (at protein level). In early embryos, deposited maternally and distributed uniformly throughout the embryo until the extended germband stage. By mid-embryogenesis, highest levels are found in the central and peripheral nervous systems with lower expression also detected in the ectoderm and mesoderm. In adults, high levels are present in the head and body of both sexes with higher expression in testis than ovary. In the ovary, expressed in both germ and follicle cells. In adult head, predominantly neuronal with broad expression throughout the brain and ventral ganglia including the mushroom body.

The protein localises to the perikaryon. It localises to the cell projection. The protein resides in the axon. Its subcellular location is the dendrite. It is found in the synapse. The protein localises to the cytoplasm. It localises to the perinuclear region. Functionally, RNA-binding protein involved in translational regulation and required for long-term memory. Required in mushroom body gamma neurons for long-term memory in male courtship. Binds to mRNA 3'-UTRs. In its monomeric form, acts as a translational repressor of genes involved in neuronal growth, synapse formation and protein turnover. In its amyloid-like oligomeric form, acts as a translational activator. The monomeric form reduces poly(A) tail length and destabilizes mRNA while the oligomeric form protects and elongates the poly(A) tail and stabilizes mRNA. Involved in asymmetric cell division in the central nervous system. Plays a role in synapse formation and morphology at neuromuscular junctions by modulating the translation of the tumor suppressor brat. Required for the progression of spermatogenesis through meiosis and for sperm differentiation. During sperm differentiation, required to asymmetrically localize and activate the translation of protein kinase aPKC mRNAs which is necessary for spermatid cyst polarization. Also required during spermatid cyst polarization for localization and translation of its own mRNA. In terms of biological role, required for initial memory acquisition. Following subsequent late dopaminergic pathway activation, recruits isoform B into a complex to activate translation of CaMKII which is required for long-term memory consolidation. The sequence is that of Translational regulator orb2 from Drosophila melanogaster (Fruit fly).